Consider the following 567-residue polypeptide: Phenylalanine--tRNA ligase beta subunit (567 aa).

A B5 domain is found at 287–362 (YFQEEVEFNV…IGEGLASFHP (76 aa)). Residues D340, D346, E349, and D350 each contribute to the Mg(2+) site.

Belongs to the phenylalanyl-tRNA synthetase beta subunit family. Type 2 subfamily. Tetramer of two alpha and two beta subunits. Mg(2+) is required as a cofactor.

Its subcellular location is the cytoplasm. The enzyme catalyses tRNA(Phe) + L-phenylalanine + ATP = L-phenylalanyl-tRNA(Phe) + AMP + diphosphate + H(+). The protein is Phenylalanine--tRNA ligase beta subunit of Borreliella afzelii (strain PKo) (Borrelia afzelii).